A 1663-amino-acid polypeptide reads, in one-letter code: Glutamine-rich protein 2 (1663 aa).

Disordered regions lie at residues 80–239 (HGGF…LVPA), 423–481 (GLVQ…GTGQ), 575–615 (AQPR…QHGL), 880–925 (TYQQ…QVYP), and 948–984 (RGPG…APGQ). Polar residues-rich tracts occupy residues 84–103 (TSLT…QPSI) and 131–150 (GVSS…QQQP). Residues 171–182 (SDSDRHRSREKL) show a composition bias toward basic and acidic residues. Low complexity predominate over residues 206 to 217 (QPSSVPASQSQV). The span at 958–975 (HGQEGLDPNRTRASDRHG) shows a compositional bias: basic and acidic residues. Coiled-coil stretches lie at residues 1085–1160 (KTVK…MENS) and 1286–1325 (EDHR…KADK). The segment covering 1609–1619 (TRLPGILRKDS) has biased composition (basic and acidic residues). The tract at residues 1609–1663 (TRLPGILRKDSSGTSKRKSQQPRPHVHRPPSLSSNGQLPSRPQSAQISAGNTSER) is disordered. Basic residues predominate over residues 1623–1636 (SKRKSQQPRPHVHR). Residues 1639 to 1663 (SLSSNGQLPSRPQSAQISAGNTSER) are compositionally biased toward polar residues.

In terms of assembly, interacts with AKAP3, ODF2 and TSSK4. Interacts with AKAP4. In terms of tissue distribution, expressed in the sperm.

Its subcellular location is the nucleus membrane. It localises to the nucleus. It is found in the cytoplasm. The protein resides in the cell projection. The protein localises to the cilium. Its subcellular location is the flagellum. Has an essential role in the formation of sperm flagella and flagellar structure maintainance. It acts as a suppressor of ubiquitination and degradation of proteins involved in flagellar development and motility. The sequence is that of Glutamine-rich protein 2 (QRICH2) from Homo sapiens (Human).